A 67-amino-acid chain; its full sequence is Andropin (67 aa).

The first 19 residues, 1–19 (MKYFLVLVVLTLILAISVG), serve as a signal peptide directing secretion.

This sequence belongs to the andropin family. Ejaculatory duct of adult males.

It is found in the secreted. Its function is as follows. Male-specific peptide with moderate activity against Gram-positive bacteria. This is Andropin (Anp) from Drosophila orena (Fruit fly).